Consider the following 346-residue polypeptide: Pyrophosphate--fructose 6-phosphate 1-phosphotransferase (346 aa).

Glycine 13 lines the diphosphate pocket. Glutamate 105 provides a ligand contact to Mg(2+). Substrate-binding positions include 127-129 (TID), arginine 164, 171-173 (MGR), glutamate 224, arginine 269, and 275-278 (HLQR). Residue aspartate 129 is the Proton acceptor of the active site.

This sequence belongs to the phosphofructokinase type A (PFKA) family. Mixed-substrate PFK group III subfamily. As to quaternary structure, homodimer. Mg(2+) is required as a cofactor.

It is found in the cytoplasm. The catalysed reaction is beta-D-fructose 6-phosphate + diphosphate = beta-D-fructose 1,6-bisphosphate + phosphate + H(+). It participates in carbohydrate degradation; glycolysis; D-glyceraldehyde 3-phosphate and glycerone phosphate from D-glucose: step 3/4. Non-allosteric. In terms of biological role, catalyzes the phosphorylation of D-fructose 6-phosphate, the first committing step of glycolysis. Uses inorganic phosphate (PPi) as phosphoryl donor instead of ATP like common ATP-dependent phosphofructokinases (ATP-PFKs), which renders the reaction reversible, and can thus function both in glycolysis and gluconeogenesis. Consistently, PPi-PFK can replace the enzymes of both the forward (ATP-PFK) and reverse (fructose-bisphosphatase (FBPase)) reactions. The polypeptide is Pyrophosphate--fructose 6-phosphate 1-phosphotransferase (Dictyoglomus thermophilum).